We begin with the raw amino-acid sequence, 76 residues long: Acyl carrier protein (76 aa).

The Carrier domain occupies 1-76 (MDTFESVKAV…DVVAYIEANK (76 aa)). At Ser36 the chain carries O-(pantetheine 4'-phosphoryl)serine.

The protein belongs to the acyl carrier protein (ACP) family. In terms of processing, 4'-phosphopantetheine is transferred from CoA to a specific serine of apo-ACP by AcpS. This modification is essential for activity because fatty acids are bound in thioester linkage to the sulfhydryl of the prosthetic group.

The protein resides in the cytoplasm. It functions in the pathway lipid metabolism; fatty acid biosynthesis. Functionally, carrier of the growing fatty acid chain in fatty acid biosynthesis. In Helicobacter hepaticus (strain ATCC 51449 / 3B1), this protein is Acyl carrier protein.